Consider the following 331-residue polypeptide: Phenylalanine--tRNA ligase alpha subunit (331 aa).

Glutamate 252 serves as a coordination point for Mg(2+).

The protein belongs to the class-II aminoacyl-tRNA synthetase family. Phe-tRNA synthetase alpha subunit type 1 subfamily. As to quaternary structure, tetramer of two alpha and two beta subunits. It depends on Mg(2+) as a cofactor.

It is found in the cytoplasm. The enzyme catalyses tRNA(Phe) + L-phenylalanine + ATP = L-phenylalanyl-tRNA(Phe) + AMP + diphosphate + H(+). In Xanthomonas axonopodis pv. citri (strain 306), this protein is Phenylalanine--tRNA ligase alpha subunit.